The primary structure comprises 252 residues: NAC domain-containing protein 83 (252 aa).

The NAC domain occupies 14-160; the sequence is LPPGFRFHPT…NWVLCRIFLK (147 aa). A DNA-binding region spans residues 110–166; that stretch reads VGLKKTLVFYKGKPPHGSRTDWIMHEYRLSSSPPSSMGPTQNWVLCRIFLKKRAGNK. Disordered stretches follow at residues 165–194 and 217–252; these read NKND…IITT and LNLL…NSFR. 2 stretches are compositionally biased toward low complexity: residues 180-194 and 219-252; these read NNNN…IITT and LLPS…NSFR. A PEST-like region spans residues 213–226; that stretch reads RTTDLNLLPSSPSS.

Interacts with NAC007/VND4, NAC026/VND5 and NAC030/VND7. Interacts with the mungbean yellow mosaic virus (MYMV) AC1 replication-associated protein. As to expression, expressed in xylem and phloem cells in roots and inflorescence stems. Highly expressed in senescent leaves. Expressed in roots, and abscission and dehiscence tissues, such as axils of bracts and abscission zones in cauline leaves and siliques.

The protein localises to the nucleus. Functionally, transcriptional repressor that negatively regulates the expression of genes involved in xylem vessel formation. Represses the transcriptional activation activity of NAC030/VND7, which regulates protoxylem vessel differentiation by promoting immature xylem vessel-specific genes expression. Transcriptional activator that regulates the COLD-REGULATED (COR15A and COR15B) and RESPONSIVE TO DEHYDRATION (LTI78/RD29A and LTI65/RD29B) genes by binding directly to their promoters. Mediates signaling crosstalk between salt stress response and leaf aging process. May play a role in DNA replication of mungbean yellow mosaic virus. The protein is NAC domain-containing protein 83 of Arabidopsis thaliana (Mouse-ear cress).